The primary structure comprises 231 residues: MAETLAHRFTEFLLESNALKFGDFTLKSGRKSPYFINAGAFDDGKKIAALGAFYAEKISQAIVHNTIPRNIDTVFGPAYKGIPLAVSTAIALTAGHNMTVGYTFDRKEKKDHGDGGWMVGTPLTDGMKVLLVDDVMTAGTAVREVIPKLKAEANVEVVGLVLSVDRMEKTKDSDLSAVKAVEAEFGFPVLAIANVREIFDAAAKMKNADSAPLLSHDIQQRAAAYLEEYGA.

5-phospho-alpha-D-ribose 1-diphosphate contacts are provided by residues lysine 27, 79 to 80, arginine 106, lysine 107, lysine 110, histidine 112, and 133 to 141; these read YK and DDVMTAGTA. 2 residues coordinate orotate: threonine 137 and arginine 166.

The protein belongs to the purine/pyrimidine phosphoribosyltransferase family. PyrE subfamily. Homodimer. Mg(2+) serves as cofactor.

It catalyses the reaction orotidine 5'-phosphate + diphosphate = orotate + 5-phospho-alpha-D-ribose 1-diphosphate. Its pathway is pyrimidine metabolism; UMP biosynthesis via de novo pathway; UMP from orotate: step 1/2. In terms of biological role, catalyzes the transfer of a ribosyl phosphate group from 5-phosphoribose 1-diphosphate to orotate, leading to the formation of orotidine monophosphate (OMP). The chain is Orotate phosphoribosyltransferase from Bifidobacterium longum (strain DJO10A).